A 239-amino-acid chain; its full sequence is U2 small nuclear ribonucleoprotein A' (239 aa).

LRR repeat units follow at residues K19 to R40, V42 to K63, R64 to V85, and N88 to A109. Residues N122–V160 enclose the LRRCT domain.

It belongs to the U2 small nuclear ribonucleoprotein A family. As to quaternary structure, belongs to the 40S cdc5-associated complex (or cwf complex), a spliceosome sub-complex reminiscent of a late-stage spliceosome composed of the U2, U5 and U6 snRNAs and at least brr2, cdc5, cwf2/prp3, cwf3/syf1, cwf4/syf3, cwf5/ecm2, spp42/cwf6, cwf7/spf27, cwf8, cwf9, cwf10, cwf11, cwf12, prp45/cwf13, cwf14, cwf15, cwf16, cwf17, cwf18, cwf19, cwf20, cwf21, cwf22, cwf23, cwf24, cwf25, cwf26, cyp7/cwf27, cwf28, cwf29/ist3, lea1, msl1, prp5/cwf1, prp10, prp12/sap130, prp17, prp22, sap61, sap62, sap114, sap145, slu7, smb1, smd1, smd3, smf1, smg1 and syf2.

The protein resides in the nucleus. Its function is as follows. Involved in pre-mRNA splicing. This protein is associated with sn-RNP U2. It helps the A' protein to bind stem loop IV of U2 snRNA. In Schizosaccharomyces pombe (strain 972 / ATCC 24843) (Fission yeast), this protein is U2 small nuclear ribonucleoprotein A' (lea1).